The sequence spans 301 residues: Transcriptional activator protein NhaR (301 aa).

Residues 6–63 enclose the HTH lysR-type domain; the sequence is INYNHLYYFWHVYKEGSVVGAAEALYLTPQTITGQIRALEERLQGKLFKRKGRGLEPS. Positions 23–42 form a DNA-binding region, H-T-H motif; sequence VVGAAEALYLTPQTITGQIR.

It belongs to the LysR transcriptional regulatory family.

The protein resides in the cytoplasm. In terms of biological role, plays a role in the positive regulation of NhaA. This is Transcriptional activator protein NhaR (nhaR) from Escherichia coli (strain K12).